Consider the following 945-residue polypeptide: Netrin receptor UNC5B (945 aa).

The signal sequence occupies residues 1 to 26 (MRARSGARGALLLALLLCWDPTPSLA). The Extracellular segment spans residues 27 to 377 (GIDSGGQALP…LEPSGDVALY (351 aa)). The Ig-like domain maps to 48 to 145 (PHFLLEPEDA…SGTTKSRRAY (98 aa)). 9 disulfide bridges follow: cysteine 69/cysteine 130, cysteine 81/cysteine 128, cysteine 174/cysteine 225, cysteine 258/cysteine 295, cysteine 262/cysteine 299, cysteine 273/cysteine 285, cysteine 314/cysteine 348, cysteine 318/cysteine 353, and cysteine 326/cysteine 338. In terms of domain architecture, Ig-like C2-type spans 153–242 (KNFDQEPLAK…KRRSTTATVI (90 aa)). Residue asparagine 222 is glycosylated (N-linked (GlcNAc...) asparagine). TSP type-1 domains are found at residues 246-300 (NGGW…TVCP) and 302-354 (DGAW…GLCV). Asparagine 347 carries N-linked (GlcNAc...) asparagine glycosylation. Residues 378–398 (AGLVVAVFVVLAVLMAVGVIV) form a helical membrane-spanning segment. Residues 399–945 (YRRNCRDFDT…LVAMTTDGDC (547 aa)) lie on the Cytoplasmic side of the membrane. Residue cysteine 403 is the site of S-palmitoyl cysteine attachment. Positions 543-686 (SSVSGTFGCL…LGTYVFTGES (144 aa)) constitute a ZU5 domain. The residue at position 581 (tyrosine 581) is a Phosphotyrosine. Positions 689 to 838 (RSAVKRLQLA…AETPAGSLDA (150 aa)) are UPA domain. The interval 707-725 (SLEYSLRVYCLEDTPAALK) is interaction with DCC. The region spanning 865-943 (KICNSLDAPN…EMLVAMTTDG (79 aa)) is the Death domain.

Belongs to the unc-5 family. As to quaternary structure, interacts with the cytoplasmic part of DCC. Interacts with GNAI2 via its cytoplasmic part. Interacts (via death domain) with DAPK1 (via death domain). Interacts (via extracellular domain) with FLRT3 (via extracellular domain); the interaction is direct. Interacts (via extracellular domain) with FLRT2 and FLRT3 (via extracellular domain), but has higher affinity for FLRT3. Identified in a complex with FLRT3 and ADGRL3; does not interact with ADGRL3 by itself. In terms of processing, phosphorylated on cytoplasmic tyrosine residues. Proteolytically cleaved by caspases during apoptosis. The cleavage does not take place when the receptor is associated with netrin ligand. Its cleavage by caspases is required to induce apoptosis. Post-translationally, palmitoylation is required for pro-apoptotic activity, but not for location at lipid rafts. As to expression, mainly expressed in regions of differentiating neurons. Expressed in the developing sensory ganglia that flank the spinal cord from E12, peaking at E14. Expressed in the roof plate region of the spinal cord from E14.

Its subcellular location is the cell membrane. The protein localises to the membrane raft. Functionally, receptor for netrin required for axon guidance. Mediates axon repulsion of neuronal growth cones in the developing nervous system upon ligand binding. Axon repulsion in growth cones may be caused by its association with DCC that may trigger signaling for repulsion. Functions as a netrin receptor that negatively regulates vascular branching during angiogenesis. Mediates retraction of tip cell filopodia on endothelial growth cones in response to netrin. It also acts as a dependence receptor required for apoptosis induction when not associated with netrin ligand. Mediates apoptosis by activating DAPK1. In the absence of NTN1, activates DAPK1 by reducing its autoinhibitory phosphorylation at Ser-308 thereby increasing its catalytic activity. This Rattus norvegicus (Rat) protein is Netrin receptor UNC5B (Unc5b).